The primary structure comprises 136 residues: Ribosome-binding factor A (136 aa).

The protein belongs to the RbfA family. In terms of assembly, monomer. Binds 30S ribosomal subunits, but not 50S ribosomal subunits or 70S ribosomes.

Its subcellular location is the cytoplasm. One of several proteins that assist in the late maturation steps of the functional core of the 30S ribosomal subunit. Associates with free 30S ribosomal subunits (but not with 30S subunits that are part of 70S ribosomes or polysomes). Required for efficient processing of 16S rRNA. May interact with the 5'-terminal helix region of 16S rRNA. This chain is Ribosome-binding factor A, found in Yersinia enterocolitica serotype O:8 / biotype 1B (strain NCTC 13174 / 8081).